Consider the following 274-residue polypeptide: MKKTAIALLAWFVSSASLAATPWQKITHPVPGAAQSIGSFANGCIIGADTLPVQSDNYQVMRTDQRRYFGHPDLVMFIQRLSHQAQQRGLGTVLIGDMGMPAGGRFNGGHASHQTGLDVDIFLQLPKTRWSQAQLLRPQALDLVSRDGKHVVPSRWSSDIASLIKLAAQDNDVTRIFVNPAIKQQLCLDAGSDRGWLRKVRPWFQHRAHMHVRLRCPADSLECEDQPLPPPGDGCGAELQSWFEPPKPGTTKPEKKTPPPLPPSCQALLDEHVL.

The N-terminal stretch at 1–19 (MKKTAIALLAWFVSSASLA) is a signal peptide. 3 disulfide bridges follow: cysteine 44/cysteine 265, cysteine 187/cysteine 235, and cysteine 216/cysteine 223. Histidine 110, histidine 113, aspartate 120, aspartate 147, histidine 150, and histidine 211 together coordinate Zn(2+). Residues 225–274 (DQPLPPPGDGCGAELQSWFEPPKPGTTKPEKKTPPPLPPSCQALLDEHVL) are disordered.

It belongs to the peptidase M74 family. In terms of assembly, dimer. The cofactor is Zn(2+).

The protein resides in the periplasm. Functionally, murein endopeptidase that cleaves the D-alanyl-meso-2,6-diamino-pimelyl amide bond that connects peptidoglycan strands. Likely plays a role in the removal of murein from the sacculus. This chain is Penicillin-insensitive murein endopeptidase, found in Salmonella heidelberg (strain SL476).